The chain runs to 282 residues: Insulin-like growth factor-binding protein 7 (282 aa).

The signal sequence occupies residues 1–26 (MERPSLRALLLGAAGLLLLLLPLSSS). One can recognise an IGFBP N-terminal domain in the interval 28 to 114 (SSDTCGPCEP…PGVSGVCVCK (87 aa)). 7 disulfide bridges follow: Cys32/Cys57, Cys35/Cys59, Cys40/Cys60, Cys48/Cys63, Cys71/Cys87, Cys81/Cys111, and Cys120/Cys156. The Kazal-like domain maps to 105–158 (PGVSGVCVCKSRYPVCGSDGTTYPSGCQLRAASQRAESRGEKAITQVSKGTCEQ). In terms of domain architecture, Ig-like C2-type spans 160–264 (PSIVTPPKDI…GQASASAKIT (105 aa)). N-linked (GlcNAc...) asparagine glycosylation occurs at Asn171. A disulfide bridge connects residues Cys181 and Cys248. Ser239 carries the phosphoserine; by FAM20C modification.

As to quaternary structure, may interact with VPS24/CHMP3; the relevance of such interaction however remains unclear. Interacts with CD93; this interaction plays a role in endothelial cells angiogenesis. Post-translationally, N-glycosylated.

The protein localises to the secreted. Functionally, binds IGF1 and IGF2 with a relatively low affinity. Stimulates prostacyclin (PGI2) production. Stimulates cell adhesion. Acts as a ligand for CD93 to play a role in angiogenesis. In Homo sapiens (Human), this protein is Insulin-like growth factor-binding protein 7 (IGFBP7).